The chain runs to 402 residues: Serine/threonine transporter SstT (402 aa).

A run of 8 helical transmembrane segments spans residues 17–37 (IAIGVVIGAILGLLIPKITVI), 44–64 (FVGGLKAIAPLLVSALVANAL), 78–98 (IIVLYLFGTFAAALTAVISHY), 138–158 (ALSQANYIGVLVWSVVFGFAM), 179–199 (IVRWIINLAPFGILGLVFDTI), 212–232 (VLILVLVGTMTFVALVINPII), 295–315 (MAGAAVTINVLTLAAVTTLGI), and 336–356 (ASGIAGGSLLLVPVACSLFGI).

The protein belongs to the dicarboxylate/amino acid:cation symporter (DAACS) (TC 2.A.23) family.

The protein resides in the cell membrane. The catalysed reaction is L-serine(in) + Na(+)(in) = L-serine(out) + Na(+)(out). It carries out the reaction L-threonine(in) + Na(+)(in) = L-threonine(out) + Na(+)(out). Its function is as follows. Involved in the import of serine and threonine into the cell, with the concomitant import of sodium (symport system). The polypeptide is Serine/threonine transporter SstT (Streptococcus thermophilus (strain ATCC BAA-250 / LMG 18311)).